Here is a 449-residue protein sequence, read N- to C-terminus: Putative recombination initiation defects 3 (449 aa).

A disordered region spans residues 21-56; sequence LRRSAEPQASQQLRSQQSQQSFSQGPSSSQRGCGGF. The segment covering 28–50 has biased composition (low complexity); the sequence is QASQQLRSQQSQQSFSQGPSSSQ. The Nuclear localization signal motif lies at 437 to 441; that stretch reads RTKRK.

Interacts with PRD1; this interaction facilitates a binding to DFO.

The protein localises to the nucleus. In terms of biological role, involved in DNA cleavage that forms the double-strand breaks (DSB) that initiate meiotic recombination. This is Putative recombination initiation defects 3 from Arabidopsis thaliana (Mouse-ear cress).